Consider the following 975-residue polypeptide: Glycine dehydrogenase (decarboxylating) (975 aa).

N6-(pyridoxal phosphate)lysine is present on K723.

This sequence belongs to the GcvP family. As to quaternary structure, the glycine cleavage system is composed of four proteins: P, T, L and H. Pyridoxal 5'-phosphate serves as cofactor.

It carries out the reaction N(6)-[(R)-lipoyl]-L-lysyl-[glycine-cleavage complex H protein] + glycine + H(+) = N(6)-[(R)-S(8)-aminomethyldihydrolipoyl]-L-lysyl-[glycine-cleavage complex H protein] + CO2. In terms of biological role, the glycine cleavage system catalyzes the degradation of glycine. The P protein binds the alpha-amino group of glycine through its pyridoxal phosphate cofactor; CO(2) is released and the remaining methylamine moiety is then transferred to the lipoamide cofactor of the H protein. The protein is Glycine dehydrogenase (decarboxylating) of Burkholderia vietnamiensis (strain G4 / LMG 22486) (Burkholderia cepacia (strain R1808)).